A 593-amino-acid chain; its full sequence is tRNA (guanine(26)-N(2))-dimethyltransferase 1 (593 aa).

A Trm1 methyltransferase domain is found at 9-465 (TVIKEGEAEV…APMEIIWDIM (457 aa)). R36 serves as a coordination point for S-adenosyl-L-methionine. The tract at residues 56 to 118 (AMLSKRARSS…KTAYESARRE (63 aa)) is disordered. Composition is skewed to basic and acidic residues over residues 68 to 81 (VVEK…KEET) and 88 to 118 (DNGK…ARRE). The S-adenosyl-L-methionine site is built by R134, D152, and V185. Zn(2+) is bound by residues C315, C318, C350, and C353. The interval 546 to 593 (VNGHLNNNHKEAGDEEEEEEEEEPEEDIIEGEPELKRQKTTEDFASTS) is disordered. Acidic residues predominate over residues 558-577 (GDEEEEEEEEEPEEDIIEGE). The segment covering 578 to 587 (PELKRQKTTE) has biased composition (basic and acidic residues).

This sequence belongs to the class I-like SAM-binding methyltransferase superfamily. Trm1 family.

It carries out the reaction guanosine(26) in tRNA + 2 S-adenosyl-L-methionine = N(2)-dimethylguanosine(26) in tRNA + 2 S-adenosyl-L-homocysteine + 2 H(+). In terms of biological role, dimethylates a single guanine residue at position 26 of most tRNAs using S-adenosyl-L-methionine as donor of the methyl groups. The sequence is that of tRNA (guanine(26)-N(2))-dimethyltransferase 1 from Arabidopsis thaliana (Mouse-ear cress).